The primary structure comprises 147 residues: Ribonuclease 4 (147 aa).

The signal sequence occupies residues 1–28 (MDIQRTQSLLLLLLLTLLGLGLVQPSYG). Glutamine 29 carries the pyrrolidone carboxylic acid modification. DUMP-binding residues include arginine 35, histidine 40, lysine 68, asparagine 71, and threonine 72. Catalysis depends on histidine 40, which acts as the Proton acceptor. Disulfide bonds link cysteine 53/cysteine 109, cysteine 67/cysteine 120, cysteine 85/cysteine 135, and cysteine 92/cysteine 99. Catalysis depends on histidine 144, which acts as the Proton donor. Residue phenylalanine 145 participates in dUMP binding.

It belongs to the pancreatic ribonuclease family.

It is found in the secreted. In terms of biological role, cleaves preferentially after uridine bases. Has antimicrobial activity against uropathogenic E.coli (UPEC). Probably contributes to urinary tract sterility. The chain is Ribonuclease 4 (Rnase4) from Rattus norvegicus (Rat).